A 351-amino-acid chain; its full sequence is sn-glycerol-3-phosphate import ATP-binding protein UgpC (351 aa).

Residues 4 to 235 enclose the ABC transporter domain; sequence IVLDNVRKSY…PASTFVATFI (232 aa). 37-44 serves as a coordination point for ATP; the sequence is GPSGCGKS.

This sequence belongs to the ABC transporter superfamily. sn-glycerol-3-phosphate importer (TC 3.A.1.1.3) family. As to quaternary structure, the complex is composed of two ATP-binding proteins (UgpC), two transmembrane proteins (UgpA and UgpE) and a solute-binding protein (UgpB).

It is found in the cell inner membrane. The enzyme catalyses sn-glycerol 3-phosphate(out) + ATP + H2O = sn-glycerol 3-phosphate(in) + ADP + phosphate + H(+). Part of the ABC transporter complex UgpBAEC involved in sn-glycerol-3-phosphate (G3P) import. Responsible for energy coupling to the transport system. The protein is sn-glycerol-3-phosphate import ATP-binding protein UgpC of Brucella abortus biovar 1 (strain 9-941).